Reading from the N-terminus, the 217-residue chain is 3-demethoxyubiquinol 3-hydroxylase (217 aa).

Residues Glu66, Glu96, His99, Glu148, Glu180, and His183 each coordinate Fe cation.

The protein belongs to the COQ7 family. Requires Fe cation as cofactor.

It localises to the cell membrane. It carries out the reaction a 5-methoxy-2-methyl-3-(all-trans-polyprenyl)benzene-1,4-diol + AH2 + O2 = a 3-demethylubiquinol + A + H2O. It participates in cofactor biosynthesis; ubiquinone biosynthesis. Its function is as follows. Catalyzes the hydroxylation of 2-nonaprenyl-3-methyl-6-methoxy-1,4-benzoquinol during ubiquinone biosynthesis. The polypeptide is 3-demethoxyubiquinol 3-hydroxylase (Xanthomonas campestris pv. campestris (strain 8004)).